Consider the following 298-residue polypeptide: GTP cyclohydrolase FolE2 (298 aa).

This sequence belongs to the GTP cyclohydrolase IV family.

The catalysed reaction is GTP + H2O = 7,8-dihydroneopterin 3'-triphosphate + formate + H(+). It participates in cofactor biosynthesis; 7,8-dihydroneopterin triphosphate biosynthesis; 7,8-dihydroneopterin triphosphate from GTP: step 1/1. In terms of biological role, converts GTP to 7,8-dihydroneopterin triphosphate. The chain is GTP cyclohydrolase FolE2 from Pseudomonas aeruginosa (strain LESB58).